Reading from the N-terminus, the 252-residue chain is Small ribosomal subunit protein uS3 (252 aa).

The 70-residue stretch at 16 to 85 (IDEYLETKLE…NPQVEVKEVD (70 aa)) folds into the KH type-2 domain. The disordered stretch occupies residues 233–252 (EESEIEEITEEIEDVETLEE).

Belongs to the universal ribosomal protein uS3 family. As to quaternary structure, part of the 30S ribosomal subunit.

Functionally, binds the lower part of the 30S subunit head. This Methanosphaera stadtmanae (strain ATCC 43021 / DSM 3091 / JCM 11832 / MCB-3) protein is Small ribosomal subunit protein uS3.